Consider the following 516-residue polypeptide: Probable serine/threonine-protein kinase DDB_G0293276 (516 aa).

A disordered region spans residues 69-115 (SIEIDDENPYNTNNNNNSNNNNNNNNNNCNNSNNSNNNKNINSLDNI). Over residues 79–115 (NTNNNNNSNNNNNNNNNNCNNSNNSNNNKNINSLDNI) the composition is skewed to low complexity. Residues 232–479 (YKHVECIGKG…SKDIKNHPYF (248 aa)) enclose the Protein kinase domain. ATP contacts are provided by residues 238-246 (IGKGGYGVV) and K261. The active-site Proton acceptor is the D350.

It belongs to the protein kinase superfamily. AGC Ser/Thr protein kinase family.

The catalysed reaction is L-seryl-[protein] + ATP = O-phospho-L-seryl-[protein] + ADP + H(+). The enzyme catalyses L-threonyl-[protein] + ATP = O-phospho-L-threonyl-[protein] + ADP + H(+). This is Probable serine/threonine-protein kinase DDB_G0293276 from Dictyostelium discoideum (Social amoeba).